A 174-amino-acid polypeptide reads, in one-letter code: Protein GrpE (174 aa).

The tract at residues 1 to 35 (MAQDIKNEEVEEVQEEEVVETAEETTPEKSELDLA) is disordered. Residues 9-25 (EVEEVQEEEVVETAEET) show a composition bias toward acidic residues. Residues 26–35 (TPEKSELDLA) show a composition bias toward basic and acidic residues.

This sequence belongs to the GrpE family. As to quaternary structure, homodimer.

It is found in the cytoplasm. Participates actively in the response to hyperosmotic and heat shock by preventing the aggregation of stress-denatured proteins, in association with DnaK and GrpE. It is the nucleotide exchange factor for DnaK and may function as a thermosensor. Unfolded proteins bind initially to DnaJ; upon interaction with the DnaJ-bound protein, DnaK hydrolyzes its bound ATP, resulting in the formation of a stable complex. GrpE releases ADP from DnaK; ATP binding to DnaK triggers the release of the substrate protein, thus completing the reaction cycle. Several rounds of ATP-dependent interactions between DnaJ, DnaK and GrpE are required for fully efficient folding. The protein is Protein GrpE of Streptococcus pneumoniae (strain ATCC BAA-255 / R6).